The chain runs to 310 residues: Nodulation protein D 2 (310 aa).

In terms of domain architecture, HTH lysR-type spans 6-63 (LDLNLLVALDALMTERKLTAAARRVKLSQPAMSAAIARLRTYFGDELFSMQGRELIPT). The segment at residues 23 to 42 (LTAAARRVKLSQPAMSAAIA) is a DNA-binding region (H-T-H motif).

This sequence belongs to the LysR transcriptional regulatory family.

Functionally, nodD regulates the expression of the nodABCFE genes which encode other nodulation proteins. NodD is also a negative regulator of its own expression. Binds flavonoids as inducers. The chain is Nodulation protein D 2 (nodD2) from Rhizobium meliloti (strain 1021) (Ensifer meliloti).